Here is a 372-residue protein sequence, read N- to C-terminus: GTPase Obg (372 aa).

Residues 1–159 (MKFVDEATIE…RRLRLELKVL (159 aa)) form the Obg domain. The OBG-type G domain occupies 160–336 (ADVGLLGLPN…LIWALQDYLD (177 aa)). GTP is bound by residues 166 to 173 (GLPNAGKS), 191 to 195 (FTTLH), 213 to 216 (DIPG), 288 to 291 (NKLD), and 317 to 319 (SGL). Residues serine 173 and threonine 193 each contribute to the Mg(2+) site. Positions 341 to 372 (KEQITQDKADGSYVHEDPRFDTTRDAPPSGKD) are disordered.

This sequence belongs to the TRAFAC class OBG-HflX-like GTPase superfamily. OBG GTPase family. As to quaternary structure, monomer. The cofactor is Mg(2+).

The protein localises to the cytoplasm. Its function is as follows. An essential GTPase which binds GTP, GDP and possibly (p)ppGpp with moderate affinity, with high nucleotide exchange rates and a fairly low GTP hydrolysis rate. Plays a role in control of the cell cycle, stress response, ribosome biogenesis and in those bacteria that undergo differentiation, in morphogenesis control. The chain is GTPase Obg from Bordetella avium (strain 197N).